Here is a 572-residue protein sequence, read N- to C-terminus: Thiamine biosynthesis protein THI22 (572 aa).

Residues 1–19 (MVIILLGLCTLGFPRTAFC) form the signal peptide.

The protein belongs to the thiaminase-2 family.

The protein resides in the secreted. Functionally, is not required for thiamine biosynthesis. The protein is Thiamine biosynthesis protein THI22 (THI22) of Saccharomyces cerevisiae (strain ATCC 204508 / S288c) (Baker's yeast).